The chain runs to 921 residues: GPI ethanolamine phosphate transferase 1 (921 aa).

A helical membrane pass occupies residues 37–57; sequence PGHVALIAGLYEDVSAVTTGW. N-linked (GlcNAc...) asparagine glycosylation is found at Asn69 and Asn132. The next 10 membrane-spanning stretches (helical) occupy residues 386–406, 418–438, 441–461, 483–503, 509–529, 533–553, 561–581, 606–626, 640–660, and 679–699; these read ALITIGYLGWVAYALTTVIDL, TLIGTIISTSALTALYASFAI, SPLTYYAYAFFPVFFWEEVYA, FVSLVFNCAVYVGIIESLALG, ILTILFVIGAFWPIAYGFSFL, MALSITWFLSCIAMSTFTLLP, VNMIMLGGALMVLVGIIYLIL, LVGIQIGLTLLAALVTRSSAL, VMGWVVLVVSLLMPLAYRAKP, and FVILTISYEGLFYIAFSAVLV. The interval 715 to 737 is disordered; the sequence is SANGAARSAPSPAKPHNLETSQT. 4 helical membrane passes run 752–772, 795–815, 825–845, and 862–882; these read VALFFFVLFQAAFFSTGNVAS, AMLILKLLIPFALISANLGIL, ALFMVVMAISDILTLYFFWVV, and VIASLLCVFVAALEGVSAMFI.

This sequence belongs to the PIGG/PIGN/PIGO family. PIGN subfamily.

It is found in the endoplasmic reticulum membrane. It functions in the pathway glycolipid biosynthesis; glycosylphosphatidylinositol-anchor biosynthesis. Functionally, ethanolamine phosphate transferase involved in glycosylphosphatidylinositol-anchor biosynthesis. Transfers ethanolamine phosphate to the first alpha-1,4-linked mannose of the glycosylphosphatidylinositol precursor of GPI-anchor. In Chaetomium globosum (strain ATCC 6205 / CBS 148.51 / DSM 1962 / NBRC 6347 / NRRL 1970) (Soil fungus), this protein is GPI ethanolamine phosphate transferase 1 (MCD4).